A 256-amino-acid polypeptide reads, in one-letter code: Large ribosomal subunit protein bL28m (256 aa).

A mitochondrion-targeting transit peptide spans Met-1–Lys-55.

This sequence belongs to the bacterial ribosomal protein bL28 family. In terms of assembly, component of the mitochondrial ribosome large subunit (39S) which comprises a 16S rRNA and about 50 distinct proteins. Interacts with OXA1L.

Its subcellular location is the mitochondrion. The protein is Large ribosomal subunit protein bL28m (MRPL28) of Bos taurus (Bovine).